Here is a 159-residue protein sequence, read N- to C-terminus: MISLIAALAVDRVIGMENAMPWDLPADLAWFKRNTLNKPVVMGRLTWESIGRPLPGRKNIVISSKPGSDDRVQWVKSVDEAIAACGDAEEIMVIGGGRVYEQFLPKAHKLYLTHIDAEVEGDTHFPDYDPDEWESVFSEFHDADAQNSHSYCFEILERR.

The DHFR domain occupies 1 to 158 (MISLIAALAV…HSYCFEILER (158 aa)). Residue I5 coordinates substrate. NADP(+)-binding positions include A7 and 13–19 (VIGMENA). D27 serves as a coordination point for substrate. 45-46 (LT) serves as a coordination point for NADP(+). Substrate contacts are provided by R52 and R57. NADP(+) contacts are provided by residues 63–64 (SS), K76, and 95–102 (GGGRVYEQ). Residue T113 participates in substrate binding.

The protein belongs to the dihydrofolate reductase family.

The enzyme catalyses (6S)-5,6,7,8-tetrahydrofolate + NADP(+) = 7,8-dihydrofolate + NADPH + H(+). The protein operates within cofactor biosynthesis; tetrahydrofolate biosynthesis; 5,6,7,8-tetrahydrofolate from 7,8-dihydrofolate: step 1/1. Its function is as follows. Key enzyme in folate metabolism. Catalyzes an essential reaction for de novo glycine and purine synthesis, and for DNA precursor synthesis. The protein is Dihydrofolate reductase (folA) of Klebsiella aerogenes (Enterobacter aerogenes).